Here is a 154-residue protein sequence, read N- to C-terminus: Hydroperoxy fatty acid reductase Gpx2 (154 aa).

The active site involves Cys34.

Belongs to the glutathione peroxidase family. In terms of assembly, monomer.

It carries out the reaction a hydroperoxy polyunsaturated fatty acid + NADPH + H(+) = a hydroxy polyunsaturated fatty acid + NADP(+) + H2O. With respect to regulation, mercaptosuccinate, pCMB, and nethylmaleimide act as inhibitors of the catalytic activity. Functionally, hydroperoxy fatty acid reductase essential for the removal of lipid hydroperoxides under normal and stress conditions, leading to the protection of membrane integrity. This is Hydroperoxy fatty acid reductase Gpx2 (gpx2) from Synechocystis sp. (strain ATCC 27184 / PCC 6803 / Kazusa).